The following is a 678-amino-acid chain: DNA mismatch repair protein MutL (678 aa).

This sequence belongs to the DNA mismatch repair MutL/HexB family.

In terms of biological role, this protein is involved in the repair of mismatches in DNA. It is required for dam-dependent methyl-directed DNA mismatch repair. May act as a 'molecular matchmaker', a protein that promotes the formation of a stable complex between two or more DNA-binding proteins in an ATP-dependent manner without itself being part of a final effector complex. This Lactiplantibacillus plantarum (strain ATCC BAA-793 / NCIMB 8826 / WCFS1) (Lactobacillus plantarum) protein is DNA mismatch repair protein MutL.